Reading from the N-terminus, the 116-residue chain is Ribonuclease P protein component (116 aa).

This sequence belongs to the RnpA family. As to quaternary structure, consists of a catalytic RNA component (M1 or rnpB) and a protein subunit.

It catalyses the reaction Endonucleolytic cleavage of RNA, removing 5'-extranucleotides from tRNA precursor.. RNaseP catalyzes the removal of the 5'-leader sequence from pre-tRNA to produce the mature 5'-terminus. It can also cleave other RNA substrates such as 4.5S RNA. The protein component plays an auxiliary but essential role in vivo by binding to the 5'-leader sequence and broadening the substrate specificity of the ribozyme. In Caldanaerobacter subterraneus subsp. tengcongensis (strain DSM 15242 / JCM 11007 / NBRC 100824 / MB4) (Thermoanaerobacter tengcongensis), this protein is Ribonuclease P protein component.